Here is a 163-residue protein sequence, read N- to C-terminus: Ribonuclease P protein subunit p25-like protein (163 aa).

Disordered stretches follow at residues 1–22 (MEHY…PQLP) and 129–163 (NEYG…DTRF). The segment covering 154–163 (PRRRARDTRF) has biased composition (basic residues).

It belongs to the histone-like Alba family.

The protein localises to the nucleus. Its function is as follows. May be a component of ribonuclease P or MRP. In Bos taurus (Bovine), this protein is Ribonuclease P protein subunit p25-like protein (RPP25L).